The chain runs to 427 residues: MAP kinase-interacting serine/threonine-protein kinase 1 (427 aa).

Over residues 1–11 (MVSSQKLEKPI) the composition is skewed to basic and acidic residues. The disordered stretch occupies residues 1–37 (MVSSQKLEKPIEMGSSEPLPIVDSDKRRKKKRKTRAT). The residue at position 34 (Thr-34) is a Phosphothreonine; by PAK2. Ser-39 carries the phosphoserine; by PAK2 modification. Positions 49 to 333 (QLTSELLGEG…AAQVLQHPWV (285 aa)) constitute a Protein kinase domain. ATP contacts are provided by residues 55 to 63 (LGEGAYAKV) and Lys-78. The active-site Proton acceptor is the Asp-170. Phosphoserine occurs at positions 180 and 185. Phosphothreonine is present on residues Thr-209, Thr-214, and Thr-344. The segment at 407–427 (RALAQAGRSRDANPCLTPAGL) is disordered.

It belongs to the protein kinase superfamily. CAMK Ser/Thr protein kinase family. In terms of assembly, interacts with the C-terminal regions of EIF4G1 and EIF4G2. Also binds to dephosphorylated ERK1 and ERK2, and to the p38 kinases. It depends on Mg(2+) as a cofactor. Dual phosphorylation of Thr-209 and Thr-214 activates the kinase. Phosphorylation of Thr-344 activates the kinase. MAPK3/ERK1 is one of the kinases which activate MKNK1/MNK1. Phosphorylation by PAK2 leads to a reduced phosphorylation of EIF4G1. Ubiquitously expressed in all tissues examined, with high levels in skeletal muscle.

It carries out the reaction L-seryl-[protein] + ATP = O-phospho-L-seryl-[protein] + ADP + H(+). It catalyses the reaction L-threonyl-[protein] + ATP = O-phospho-L-threonyl-[protein] + ADP + H(+). Phosphorylated and activated by the p38 kinases and kinases in the Erk pathway. Its function is as follows. May play a role in the response to environmental stress and cytokines. Appears to regulate translation by phosphorylating EIF4E, thus increasing the affinity of this protein for the 7-methylguanosine-containing mRNA cap. The sequence is that of MAP kinase-interacting serine/threonine-protein kinase 1 (Mknk1) from Mus musculus (Mouse).